The following is a 419-amino-acid chain: Phosphoglycerate kinase (419 aa).

The (2R)-3-phosphoglycerate site is built by Val-24, Asp-25, Phe-26, Asn-27, Arg-40, Ser-63, His-64, Gly-66, Arg-67, Leu-122, Arg-123, His-169, and Arg-170. An ADP-binding site is contributed by Gly-213. Position 213 (Gly-213) interacts with CDP. Ala-214 and Lys-215 together coordinate AMP. Ala-214 contributes to the ATP binding site. Ala-214 serves as a coordination point for Mg(2+). Mg(2+)-binding residues include Ala-217 and Asp-218. Asp-218 lines the CDP pocket. Lys-219 contributes to the AMP binding site. Lys-219 provides a ligand contact to ATP. ADP is bound at residue Gly-237. Gly-237 is a binding site for CDP. The AMP site is built by Gly-238 and Gly-313. ATP-binding residues include Gly-238 and Gly-313. CDP-binding residues include Gly-338 and Phe-343. Phe-343 contributes to the ADP binding site. Residue Glu-344 coordinates AMP. 3 residues coordinate ATP: Glu-344, Asp-375, and Thr-376. Asp-375 contributes to the Mg(2+) binding site.

This sequence belongs to the phosphoglycerate kinase family. Monomer. Mg(2+) serves as cofactor.

It carries out the reaction (2R)-3-phosphoglycerate + ATP = (2R)-3-phospho-glyceroyl phosphate + ADP. The protein operates within carbohydrate degradation; glycolysis; pyruvate from D-glyceraldehyde 3-phosphate: step 2/5. In Sterkiella nova (Ciliate), this protein is Phosphoglycerate kinase (PGK).